The chain runs to 318 residues: Beta-ketoacyl-[acyl-carrier-protein] synthase III (318 aa).

Catalysis depends on residues Cys112 and His245. The segment at 246-250 (QANLR) is ACP-binding. Asn275 is a catalytic residue.

This sequence belongs to the thiolase-like superfamily. FabH family. Homodimer.

Its subcellular location is the cytoplasm. It catalyses the reaction malonyl-[ACP] + acetyl-CoA + H(+) = 3-oxobutanoyl-[ACP] + CO2 + CoA. It functions in the pathway lipid metabolism; fatty acid biosynthesis. Catalyzes the condensation reaction of fatty acid synthesis by the addition to an acyl acceptor of two carbons from malonyl-ACP. Catalyzes the first condensation reaction which initiates fatty acid synthesis and may therefore play a role in governing the total rate of fatty acid production. Possesses both acetoacetyl-ACP synthase and acetyl transacylase activities. Its substrate specificity determines the biosynthesis of branched-chain and/or straight-chain of fatty acids. In Blochmanniella floridana, this protein is Beta-ketoacyl-[acyl-carrier-protein] synthase III.